A 219-amino-acid polypeptide reads, in one-letter code: 7-cyano-7-deazaguanine synthase 2 (219 aa).

8–18 (YSGGMDSFTAL) contacts ATP. 4 residues coordinate Zn(2+): Cys185, Cys193, Cys196, and Cys199.

Belongs to the QueC family. Requires Zn(2+) as cofactor.

It carries out the reaction 7-carboxy-7-deazaguanine + NH4(+) + ATP = 7-cyano-7-deazaguanine + ADP + phosphate + H2O + H(+). Its pathway is purine metabolism; 7-cyano-7-deazaguanine biosynthesis. In terms of biological role, catalyzes the ATP-dependent conversion of 7-carboxy-7-deazaguanine (CDG) to 7-cyano-7-deazaguanine (preQ(0)). This Colwellia psychrerythraea (strain 34H / ATCC BAA-681) (Vibrio psychroerythus) protein is 7-cyano-7-deazaguanine synthase 2.